The sequence spans 255 residues: Sushi domain-containing protein 3 (255 aa).

The segment at 1–25 (MRWAAATLRGKARPRGRAGVTTPAP) is disordered. Residues 1–103 (MRWAAATLRG…VPPHETFGFK (103 aa)) lie on the Extracellular side of the membrane. N-linked (GlcNAc...) asparagine glycosylation is present at Asn27. The Sushi domain occupies 30–93 (GTCAKLRLPP…WSSGSPVCKL (64 aa)). Disulfide bonds link Cys32-Cys75 and Cys61-Cys91. Residues 104 to 124 (VAVIASIVSCAIILLMSMAFL) form a helical membrane-spanning segment. The Cytoplasmic segment spans residues 125-255 (TCCLLKCVKK…PQQPAAYALG (131 aa)). A disordered region spans residues 173–255 (SGPSQAHDNH…PQQPAAYALG (83 aa)). Positions 179-191 (HDNHSFTTDHGES) are enriched in basic and acidic residues.

In terms of tissue distribution, highly expressed in estrogen receptor-positive breast tumors.

It localises to the cell membrane. In terms of biological role, may play a role in breast tumorigenesis by promoting estrogen-dependent cell proliferation, cell-cell interactions and migration. The chain is Sushi domain-containing protein 3 (SUSD3) from Homo sapiens (Human).